Consider the following 245-residue polypeptide: MYPVDLHMHTVASTHAYSTLHDYIAEAKRKGIKLFAITDHGPDMADAPHHWHFINMRIWPRLVDGVGILRGIEANIKNIDGEIDCTGPMLNSLDVIIAGFHEPVFAPHDKETNTQAMIAAMASGNVHIISHPGNPKYPVDITAIAQAAAKYQVALEINNSSFLHSRKGSEDNCRAVAAAVRDAGGWVALGSDSHTAFTLGEFAECRKILDEVDFPEERVLNVSPGRLLRFLESRGMAPIPEFAEL.

Histidine 7, histidine 9, histidine 15, histidine 40, glutamate 73, histidine 101, histidine 131, aspartate 192, and histidine 194 together coordinate Zn(2+).

This sequence belongs to the PHP family. As to quaternary structure, homotrimer. Requires Zn(2+) as cofactor.

This Citrobacter koseri (strain ATCC BAA-895 / CDC 4225-83 / SGSC4696) protein is Probable phosphatase CKO_02035.